Here is a 293-residue protein sequence, read N- to C-terminus: 4-hydroxy-tetrahydrodipicolinate synthase (293 aa).

Thr-46 is a binding site for pyruvate. Catalysis depends on Tyr-133, which acts as the Proton donor/acceptor. Lys-161 serves as the catalytic Schiff-base intermediate with substrate. Val-202 contributes to the pyruvate binding site.

This sequence belongs to the DapA family. As to quaternary structure, homotetramer; dimer of dimers.

Its subcellular location is the cytoplasm. It carries out the reaction L-aspartate 4-semialdehyde + pyruvate = (2S,4S)-4-hydroxy-2,3,4,5-tetrahydrodipicolinate + H2O + H(+). Its pathway is amino-acid biosynthesis; L-lysine biosynthesis via DAP pathway; (S)-tetrahydrodipicolinate from L-aspartate: step 3/4. Functionally, catalyzes the condensation of (S)-aspartate-beta-semialdehyde [(S)-ASA] and pyruvate to 4-hydroxy-tetrahydrodipicolinate (HTPA). This is 4-hydroxy-tetrahydrodipicolinate synthase from Wolbachia pipientis subsp. Culex pipiens (strain wPip).